Reading from the N-terminus, the 120-residue chain is Large ribosomal subunit protein uL18 (120 aa).

Belongs to the universal ribosomal protein uL18 family. Part of the 50S ribosomal subunit; part of the 5S rRNA/L5/L18/L25 subcomplex. Contacts the 5S and 23S rRNAs.

Its function is as follows. This is one of the proteins that bind and probably mediate the attachment of the 5S RNA into the large ribosomal subunit, where it forms part of the central protuberance. The chain is Large ribosomal subunit protein uL18 from Rhodopseudomonas palustris (strain BisB5).